The sequence spans 1074 residues: Phospholipase D1 (1074 aa).

Positions 81–212 (VKAQVLEVER…TEFLDVSQLS (132 aa)) constitute a PX domain. A PH domain is found at 219-328 (PKGLEGMIMK…WGGAIEEFIQ (110 aa)). Residues cysteine 240 and cysteine 241 are each lipidated (S-palmitoyl cysteine). The PLD phosphodiesterase 1 domain maps to 459–486 (YLWAHHEKLVIIDQSVAFVGGIDLAYGR). The interval 463–928 (HHEKLVIIDQ…MLGKRDSEMA (466 aa)) is catalytic. A phosphoserine mark is found at serine 499, serine 561, and serine 629. In terms of domain architecture, PLD phosphodiesterase 2 spans 891–918 (ELIYVHSKLLIADDNTVIIGSANINDRS).

This sequence belongs to the phospholipase D family. In terms of assembly, interacts with PIP5K1B. Post-translationally, phosphorylated on serine and threonine residues. In terms of processing, it is uncertain whether palmitoylation is on Cys-240 and/or Cys-241. Palmitoylation is required prior to phosphorylation.

It is found in the cytoplasm. The protein localises to the perinuclear region. The protein resides in the endoplasmic reticulum membrane. It localises to the golgi apparatus membrane. Its subcellular location is the late endosome membrane. The catalysed reaction is a 1,2-diacyl-sn-glycero-3-phosphocholine + H2O = a 1,2-diacyl-sn-glycero-3-phosphate + choline + H(+). It carries out the reaction ethanol + a 1,2-diacyl-sn-glycero-3-phosphocholine = 1,2-diacyl-sn-glycero-3-phosphoethanol + choline. It catalyses the reaction 1,2-dihexadecanoyl-sn-glycero-3-phosphocholine + H2O = 1,2-dihexadecanoyl-sn-glycero-3-phosphate + choline + H(+). Its activity is regulated as follows. Stimulated by phosphatidylinositol 4,5-bisphosphate and phosphatidylinositol 3,4,5-trisphosphate, activated by the phosphokinase C-alpha, by the ADP-ribosylation factor-1 (ARF-1), and to a lesser extent by GTP-binding proteins: RHO A, RAC-1 and CDC42. Inhibited by oleate. Function as phospholipase selective for phosphatidylcholine. Implicated as a critical step in numerous cellular pathways, including signal transduction, membrane trafficking, and the regulation of mitosis. May be involved in the regulation of perinuclear intravesicular membrane traffic. This is Phospholipase D1 from Rattus norvegicus (Rat).